The following is a 105-amino-acid chain: Large ribosomal subunit protein uL24 (105 aa).

This sequence belongs to the universal ribosomal protein uL24 family. As to quaternary structure, part of the 50S ribosomal subunit.

Its function is as follows. One of two assembly initiator proteins, it binds directly to the 5'-end of the 23S rRNA, where it nucleates assembly of the 50S subunit. Functionally, one of the proteins that surrounds the polypeptide exit tunnel on the outside of the subunit. The protein is Large ribosomal subunit protein uL24 of Clostridium botulinum (strain 657 / Type Ba4).